We begin with the raw amino-acid sequence, 400 residues long: F-box/kelch-repeat protein At4g19870 (400 aa).

A compositionally biased stretch (basic and acidic residues) spans 1–10; sequence MKRQAKPPEK. Residues 1–33 are disordered; sequence MKRQAKPPEKKTKRTTNASSPTPSSSSPSLSSL. A compositionally biased stretch (low complexity) spans 19–33; it reads SSPTPSSSSPSLSSL. The 47-residue stretch at 27-73 folds into the F-box domain; it reads SPSLSSLPDEIVENCLARISRSYYPTLSIVSKSFRSIISSTELYVAR. Kelch repeat units follow at residues 146-192, 194-240, and 242-284; these read EIYV…LYDG, IYVI…RIAE, and EGKI…SVLY.

The polypeptide is F-box/kelch-repeat protein At4g19870 (Arabidopsis thaliana (Mouse-ear cress)).